The primary structure comprises 446 residues: Histidine--tRNA ligase (446 aa).

This sequence belongs to the class-II aminoacyl-tRNA synthetase family. In terms of assembly, homodimer.

It is found in the cytoplasm. The catalysed reaction is tRNA(His) + L-histidine + ATP = L-histidyl-tRNA(His) + AMP + diphosphate + H(+). This chain is Histidine--tRNA ligase, found in Burkholderia cenocepacia (strain HI2424).